A 326-amino-acid chain; its full sequence is Olfactory receptor 11H1 (326 aa).

The Extracellular segment spans residues 1–44 (MCPLTLQVTGLMNVSEPNSSFAFVNEFILQGFSCEWTIQIFLFS). Residues asparagine 13 and asparagine 18 are each glycosylated (N-linked (GlcNAc...) asparagine). Residues 45–65 (LFTTTYALTITGNGAIAFVLW) form a helical membrane-spanning segment. The Cytoplasmic portion of the chain corresponds to 66–72 (CDRRLHT). The helical transmembrane segment at 73–93 (PMYMFLGNFSFLEIWYVSSTV) threads the bilayer. The Extracellular segment spans residues 94–112 (PKMLVNFLSEKKNISFAGC). Residue asparagine 106 is glycosylated (N-linked (GlcNAc...) asparagine). Cysteine 112 and cysteine 194 are disulfide-bonded. The chain crosses the membrane as a helical span at residues 113 to 133 (FLQFYFFFSLGTSECLLLTVM). Residues 134–158 (AFDQYLAICRPLLYPNIMTGHLYAK) lie on the Cytoplasmic side of the membrane. The chain crosses the membrane as a helical span at residues 159–179 (LVILCWVCGFLWFLIPIVLIS). At 180 to 216 (QMPFCGPNIIDHVVCDPGPRFALDCVSAPRIQLFCYT) the chain is on the extracellular side. The chain crosses the membrane as a helical span at residues 217 to 237 (LSSLVIFGNFLFIIGSYTLVL). Topologically, residues 238–259 (KAMLGMPSSTGRHKAFSTCGSH) are cytoplasmic. Residues 260 to 280 (LAVVSLCYSSLMVMYVSPGLG) traverse the membrane as a helical segment. Topologically, residues 281-287 (HSTGMQK) are extracellular. The helical transmembrane segment at 288-308 (IETLFYAMVTPLFNPLIYSLQ) threads the bilayer. Residues 309–326 (NKEIKAALRKVLGSSNII) lie on the Cytoplasmic side of the membrane.

It belongs to the G-protein coupled receptor 1 family.

The protein resides in the cell membrane. Odorant receptor. This Homo sapiens (Human) protein is Olfactory receptor 11H1 (OR11H1).